A 459-amino-acid polypeptide reads, in one-letter code: Vicilin (459 aa).

The N-terminal stretch at 1-28 (MAATTMKASFPLLMLMGISFLASVCVSS) is a signal peptide. The 159-residue stretch at 36–194 (FIFKSNKFQT…SFNTDYEEIE (159 aa)) folds into the Cupin type-1 1 domain. Disordered regions lie at residues 235–258 (LSKNAKSTSKKSVSSESEPFNLRS), 321–346 (ELVGQRNENQQEQRKEDDEEEEQGEE), and 430–459 (ENQKQSHFADAQPQQRERGSRETRDRLSSV). Residues 238-251 (NAKSTSKKSVSSES) are compositionally biased toward low complexity. A Cupin type-1 2 domain is found at 254–426 (FNLRSRGPIY…AFPGSAQEVD (173 aa)). A compositionally biased stretch (acidic residues) spans 337–346 (DDEEEEQGEE). Positions 444 to 459 (QRERGSRETRDRLSSV) are enriched in basic and acidic residues.

It belongs to the 7S seed storage protein family.

It is found in the vacuole. The protein resides in the aleurone grain. Seed storage protein. The sequence is that of Vicilin from Pisum sativum (Garden pea).